The following is a 331-amino-acid chain: Large ribosomal subunit protein uL3 (331 aa).

The protein belongs to the universal ribosomal protein uL3 family. As to quaternary structure, part of the 50S ribosomal subunit. Forms a cluster with proteins L14 and L24e.

Its function is as follows. One of the primary rRNA binding proteins, it binds directly near the 3'-end of the 23S rRNA, where it nucleates assembly of the 50S subunit. The protein is Large ribosomal subunit protein uL3 of Thermoplasma volcanium (strain ATCC 51530 / DSM 4299 / JCM 9571 / NBRC 15438 / GSS1).